A 337-amino-acid polypeptide reads, in one-letter code: Ornithine carbamoyltransferase, catabolic (337 aa).

Carbamoyl phosphate contacts are provided by residues 58–61, Gln85, Arg109, and 135–138; these read STRT and HPTQ. L-ornithine is bound by residues Asn167, Asp231, and 235-236; that span reads SM. Carbamoyl phosphate-binding positions include 272 to 273 and Arg317; that span reads CL.

The protein belongs to the aspartate/ornithine carbamoyltransferase superfamily. OTCase family.

It localises to the cytoplasm. It carries out the reaction carbamoyl phosphate + L-ornithine = L-citrulline + phosphate + H(+). Its pathway is amino-acid degradation; L-arginine degradation via ADI pathway; carbamoyl phosphate from L-arginine: step 2/2. In terms of biological role, reversibly catalyzes the transfer of the carbamoyl group from carbamoyl phosphate (CP) to the N(epsilon) atom of ornithine (ORN) to produce L-citrulline. The protein is Ornithine carbamoyltransferase, catabolic (arcB) of Latilactobacillus sakei (Lactobacillus sakei).